The chain runs to 406 residues: Mitochondrial ribosome-associated GTPase 2 (406 aa).

The segment at 15–406 (FEGVGHWALS…LGQGRQPLRW (392 aa)) is localized in the mitochondria. A not localized in the mitochondria region spans residues 30 to 406 (KPSRLLPQQA…LGQGRQPLRW (377 aa)). An Obg domain is found at 70–224 (RYFVDYRRVL…RVLHLELKTV (155 aa)). The OBG-type G domain occupies 225 to 390 (AHAGMVGFPN…LLLHLKVLYD (166 aa)). Residues 231-238 (GFPNAGKS), 256-260 (FTTLK), 278-281 (DIPG), 345-348 (NKID), and 371-373 (SAL) contribute to the GTP site. 2 residues coordinate Mg(2+): serine 238 and threonine 258.

It belongs to the TRAFAC class OBG-HflX-like GTPase superfamily. OBG GTPase family. As to quaternary structure, associates with the mitochondrial ribosome large subunit; the association occurs in a GTP-dependent manner. Mg(2+) serves as cofactor.

It localises to the mitochondrion. The protein localises to the mitochondrion inner membrane. Its function is as follows. Plays a role in the regulation of the mitochondrial ribosome assembly and of translational activity. Displays GTPase activity. Involved in the ribosome maturation process. In Pongo abelii (Sumatran orangutan), this protein is Mitochondrial ribosome-associated GTPase 2 (MTG2).